The following is a 436-amino-acid chain: Protein translocase subunit SecY (436 aa).

10 helical membrane passes run 18 to 38, 69 to 89, 116 to 138, 154 to 174, 187 to 207, 214 to 234, 266 to 286, 314 to 334, 375 to 395, and 396 to 416; these read IAFTLGLIAVYRMGDFVPATG, LLQVSVFALGIMPYITASIIV, YTRYLTLALALLQATTMASLART, ILTVLLVVIALTTGCLIVMWF, MSLLIFTSIAAGFPAGLGQVV, VFAIVMGIGLLTMLAIVFVEE, MANVIPVIFASSVLMLPGILI, PVYMALYFLLIIGFTYFYVSI, VVGALYLGIVAMIPLIAFAVI, and GTSQNFPLGGTSILIMVGVGL.

Belongs to the SecY/SEC61-alpha family. As to quaternary structure, component of the Sec protein translocase complex. Heterotrimer consisting of SecY, SecE and SecG subunits. The heterotrimers can form oligomers, although 1 heterotrimer is thought to be able to translocate proteins. Interacts with the ribosome. Interacts with SecDF, and other proteins may be involved. Interacts with SecA.

It localises to the cell membrane. In terms of biological role, the central subunit of the protein translocation channel SecYEG. Consists of two halves formed by TMs 1-5 and 6-10. These two domains form a lateral gate at the front which open onto the bilayer between TMs 2 and 7, and are clamped together by SecE at the back. The channel is closed by both a pore ring composed of hydrophobic SecY resides and a short helix (helix 2A) on the extracellular side of the membrane which forms a plug. The plug probably moves laterally to allow the channel to open. The ring and the pore may move independently. This is Protein translocase subunit SecY from Micrococcus luteus (Micrococcus lysodeikticus).